We begin with the raw amino-acid sequence, 105 residues long: Nucleoid-associated protein ABC0038 (105 aa).

The span at 1–22 (MEMKNMGNMMKQMQKMQKQMMK) shows a compositional bias: low complexity. Positions 1 to 26 (MEMKNMGNMMKQMQKMQKQMMKAQEE) are disordered.

Belongs to the YbaB/EbfC family. As to quaternary structure, homodimer.

It is found in the cytoplasm. The protein localises to the nucleoid. Binds to DNA and alters its conformation. May be involved in regulation of gene expression, nucleoid organization and DNA protection. This chain is Nucleoid-associated protein ABC0038, found in Shouchella clausii (strain KSM-K16) (Alkalihalobacillus clausii).